The sequence spans 229 residues: Protein fmp52-2, mitochondrial (229 aa).

Residues 1-44 (MTAAAVFGCTGAVGSQILATLLASDAFSSVATVSRKLPTAESPK) constitute a mitochondrion transit peptide.

Belongs to the FMP52 family.

The protein localises to the mitochondrion outer membrane. The chain is Protein fmp52-2, mitochondrial (fmp522) from Aspergillus terreus (strain NIH 2624 / FGSC A1156).